The sequence spans 328 residues: Biotin synthase (328 aa).

In terms of domain architecture, Radical SAM core spans Y42–S267. [4Fe-4S] cluster-binding residues include C57, C61, and C64. [2Fe-2S] cluster-binding residues include C101, C133, C193, and R265.

It belongs to the radical SAM superfamily. Biotin synthase family. Homodimer. [4Fe-4S] cluster is required as a cofactor. The cofactor is [2Fe-2S] cluster.

It carries out the reaction (4R,5S)-dethiobiotin + (sulfur carrier)-SH + 2 reduced [2Fe-2S]-[ferredoxin] + 2 S-adenosyl-L-methionine = (sulfur carrier)-H + biotin + 2 5'-deoxyadenosine + 2 L-methionine + 2 oxidized [2Fe-2S]-[ferredoxin]. It functions in the pathway cofactor biosynthesis; biotin biosynthesis; biotin from 7,8-diaminononanoate: step 2/2. In terms of biological role, catalyzes the conversion of dethiobiotin (DTB) to biotin by the insertion of a sulfur atom into dethiobiotin via a radical-based mechanism. The sequence is that of Biotin synthase from Synechococcus sp. (strain CC9311).